A 316-amino-acid chain; its full sequence is MTNDFHHITVLLHETIDMLDIKPDGIYVDATLGGAGHSECLLSKLGKEGHLYCFDQDQKAIDNAKIRLQQYVKTGQVSFIKDNFRHLKSRLADEGIYEIDGICYDLGVSSPQLDERERGFSYKKDAPLDMRMNQDAQLTAFDVVNTYDYRDLVRLFFKYGEDKFSKQIARKIESARKEKLIETTAELAEIIKSAKPAKELKKKGHPAKQIFQAIRIEVNDELGAAEESLTQALDLLALNGRIAVITFHSLEDRLTKQLFKEVTTLDVPKGLPFVPENLQPKFSLVNRKPILPNARELSENNRAHSAKLRVIQKIRN.

S-adenosyl-L-methionine is bound by residues 35–37 (AGH), D55, F84, D105, and Q112.

Belongs to the methyltransferase superfamily. RsmH family.

The protein localises to the cytoplasm. The catalysed reaction is cytidine(1402) in 16S rRNA + S-adenosyl-L-methionine = N(4)-methylcytidine(1402) in 16S rRNA + S-adenosyl-L-homocysteine + H(+). In terms of biological role, specifically methylates the N4 position of cytidine in position 1402 (C1402) of 16S rRNA. This Streptococcus mutans serotype c (strain ATCC 700610 / UA159) protein is Ribosomal RNA small subunit methyltransferase H.